A 376-amino-acid polypeptide reads, in one-letter code: Enoyl-[acyl-carrier-protein] reductase, mitochondrial (376 aa).

Tyr72 serves as the catalytic Proton donor. NADP(+)-binding positions include Asn154, 182-185 (TSAV), 205-207 (RDR), 280-283 (YGGM), 305-307 (YWI), and Lys369.

Belongs to the zinc-containing alcohol dehydrogenase family. Quinone oxidoreductase subfamily. In terms of assembly, homodimer.

Its subcellular location is the mitochondrion matrix. The enzyme catalyses a 2,3-saturated acyl-[ACP] + NADP(+) = a (2E)-enoyl-[ACP] + NADPH + H(+). Functionally, catalyzes the NADPH-dependent reduction of trans-2-enoyl thioesters in mitochondrial fatty acid synthesis (fatty acid synthesis type II). Fatty acid chain elongation in mitochondria uses acyl carrier protein (ACP) as an acyl group carrier, but the enzyme accepts both ACP and CoA thioesters as substrates in vitro. Required for respiration and the maintenance of the mitochondrial compartment. The sequence is that of Enoyl-[acyl-carrier-protein] reductase, mitochondrial (ETR1) from Eremothecium gossypii (strain ATCC 10895 / CBS 109.51 / FGSC 9923 / NRRL Y-1056) (Yeast).